Here is a 795-residue protein sequence, read N- to C-terminus: ATP-dependent RNA helicase DHX15 (795 aa).

Residues 1–108 form a disordered region; it reads MSKRHRLDLG…HSTHAGHAGH (108 aa). Ser-15 carries the phosphoserine modification. The segment covering 20–62 has biased composition (basic and acidic residues); that stretch reads AGTDGKDRDRDRDREDRSKDRDRERDRGDREREREKEKEKELR. Residues 79–108 show a composition bias toward low complexity; the sequence is ASHSAHSTHSAHSAHSTHSAHSTHAGHAGH. Residues 147-313 form the Helicase ATP-binding domain; the sequence is TDILVRHQSF…FDNCPLLTIP (167 aa). An ATP-binding site is contributed by 160–167; sequence GETGSGKT. The DEAH box motif lies at 260-263; sequence DEAH. One can recognise a Helicase C-terminal domain in the interval 338–518; sequence TVIQIHMCEE…SVVLQLKKLG (181 aa). An N6-acetyllysine modification is found at Lys-488. Lys-786 is covalently cross-linked (Glycyl lysine isopeptide (Lys-Gly) (interchain with G-Cter in SUMO2)).

This sequence belongs to the DEAD box helicase family. DEAH subfamily. DDX15/PRP43 sub-subfamily. As to quaternary structure, component of the U11/U12 snRNPs that are part of the U12-type spliceosome. Identified in the Intron Large spliceosome complex (IL, also named intron lariat spliceosome), a post-mRNA release spliceosomal complex containing the excised intron, U2, U5 and U6 snRNPs, and splicing factors; the association may be transient. The IL complex exists in two distinct conformations, one with the DHX15 (ILS2) and one without (ILS1). Interacts with TFIP11 (via G-patch domain); indicative for a recruitment to the IL complex. Interacts with SSB/La. Interacts with GPATCH2 (via G-patch domain); promoting the RNA helicase activity. Interacts with NKRF (via G-patch domain); promoting the RNA helicase activity. Interacts with NLRP6.

The protein localises to the nucleus. Its subcellular location is the nucleolus. It carries out the reaction ATP + H2O = ADP + phosphate + H(+). ATPase activity is enhanced upon binding to G-patch domain-containing proteins. G-patch domain-containing proteins act like a brace that tethers mobile sections of DHX15 together, stabilizing a functional conformation with high RNA affinity, thereby promoting the ATPase activity. In terms of biological role, RNA helicase involved in mRNA processing and antiviral innate immunity. Pre-mRNA processing factor involved in disassembly of spliceosomes after the release of mature mRNA. In cooperation with TFIP11 seem to be involved in the transition of the U2, U5 and U6 snRNP-containing IL complex to the snRNP-free IS complex leading to efficient debranching and turnover of excised introns. Plays a key role in antiviral innate immunity by promoting both MAVS-dependent signaling and NLRP6 inflammasome. Acts as an RNA virus sensor: recognizes and binds viral double stranded RNA (dsRNA) and activates the MAVS-dependent signaling to produce interferon-beta and interferon lambda-3 (IFNL3). Involved in intestinal antiviral innate immunity together with NLRP6: recognizes and binds viral dsRNA and promotes activation of the NLRP6 inflammasome in intestinal epithelial cells to restrict infection by enteric viruses. The NLRP6 inflammasome acts by promoting maturation and secretion of IL18 in the extracellular milieu. Also involved in antibacterial innate immunity by promoting Wnt-induced antimicrobial protein expression in Paneth cells. The sequence is that of ATP-dependent RNA helicase DHX15 from Pongo abelii (Sumatran orangutan).